A 315-amino-acid polypeptide reads, in one-letter code: MFYMEFILSLIGSLLLIICVLVSVAFLTLLERKVLGYIQIRKGPNKVGLMGIPQPFCDAIKLFTKEQTYPLLSNYLSYYISPIFSLFLSLFVWMCMPFFVKLYSFNLGGLFFLCCTSLGVYTVMIAGWSSNSNYALLGGLRAVAQTISYEVSLALILLSFVFLIGSYNMMYFFYYQIYIWFLIILFPMALVWLTISLAETNRTPFDFAEGESELVSGFNVEYSSGGFALIFMAEYASILFMSMLFCVIFLGCDVFNLLFYVKLTFISFVFIWARGTLPRFRYDKLMYLAWKCFLSFSLNYLLFFIGFKILLFSFL.

Transmembrane regions (helical) follow at residues 6-26, 80-100, 107-127, 153-173, 177-197, 229-249, 253-273, and 292-312; these read FILSLIGSLLLIICVLVSVAF, ISPIFSLFLSLFVWMCMPFFV, LGGLFFLCCTSLGVYTVMIAG, LALILLSFVFLIGSYNMMYFF, IYIWFLIILFPMALVWLTISL, LIFMAEYASILFMSMLFCVIF, DVFNLLFYVKLTFISFVFIWA, and CFLSFSLNYLLFFIGFKILLF.

It belongs to the complex I subunit 1 family.

It is found in the mitochondrion inner membrane. The enzyme catalyses a ubiquinone + NADH + 5 H(+)(in) = a ubiquinol + NAD(+) + 4 H(+)(out). In terms of biological role, core subunit of the mitochondrial membrane respiratory chain NADH dehydrogenase (Complex I) that is believed to belong to the minimal assembly required for catalysis. Complex I functions in the transfer of electrons from NADH to the respiratory chain. The immediate electron acceptor for the enzyme is believed to be ubiquinone. In Drosophila persimilis (Fruit fly), this protein is NADH-ubiquinone oxidoreductase chain 1 (mt:ND1).